The following is a 223-amino-acid chain: UPF0173 metal-dependent hydrolase TV0864 (223 aa).

The protein belongs to the UPF0173 family.

This Thermoplasma volcanium (strain ATCC 51530 / DSM 4299 / JCM 9571 / NBRC 15438 / GSS1) protein is UPF0173 metal-dependent hydrolase TV0864.